Consider the following 384-residue polypeptide: Sensor-like histidine kinase SenX3 (384 aa).

One can recognise a Histidine kinase domain in the interval 153–369 (NVSHELKTPV…TFTLSIPEYP (217 aa)). Position 156 is a phosphohistidine; by autocatalysis (H156). The segment at 360-384 (TFTLSIPEYPDPESHSDEREDQRER) is disordered. The span at 371-384 (PESHSDEREDQRER) shows a compositional bias: basic and acidic residues.

Post-translationally, autophosphorylated.

The protein resides in the cell membrane. The catalysed reaction is ATP + protein L-histidine = ADP + protein N-phospho-L-histidine.. Member of the two-component regulatory system SenX3/RegX3 involved in stress response. The system is involved in phosphate starvation response. Probably exhibits a dual role as a phosphatase or a phosphodonor for the response regulator RegX3, depending upon phosphate availability. When environmental phosphate is abundant, SenX3 is required to maintain RegX3 in an unphosphorylated state, where it is unable to bind target DNA. Under conditions of phosphate limitation, SenX3 autophosphorylates and then transfers the phosphate group to RegX3. Probably does not itself sense phosphate concentrations, which may be relayed to SenX3 by the PstSCAB phosphate transporter system. The chain is Sensor-like histidine kinase SenX3 from Mycolicibacterium smegmatis (strain ATCC 700084 / mc(2)155) (Mycobacterium smegmatis).